A 77-amino-acid polypeptide reads, in one-letter code: U18-lycotoxin-Ls1a (77 aa).

The N-terminal stretch at 1-22 (MSPKMQALLLLLGLITLLVVHA) is a signal peptide. Residues 23–34 (EEELSENTESER) constitute a propeptide that is removed on maturation. 4 cysteine pairs are disulfide-bonded: Cys36–Cys51, Cys43–Cys56, Cys50–Cys67, and Cys58–Cys65.

Belongs to the neurotoxin 02 (plectoxin) family. Expressed by the venom gland.

It is found in the secreted. This is U18-lycotoxin-Ls1a from Lycosa singoriensis (Wolf spider).